A 332-amino-acid polypeptide reads, in one-letter code: Holliday junction branch migration complex subunit RuvB (332 aa).

A large ATPase domain (RuvB-L) region spans residues 1–181 (MSRILDNEIM…FGITGHMEYY (181 aa)). Residues leucine 20, arginine 21, glycine 62, lysine 65, threonine 66, threonine 67, 128-130 (EDF), arginine 171, tyrosine 181, and arginine 218 each bind ATP. Residue threonine 66 participates in Mg(2+) binding. The small ATPAse domain (RuvB-S) stretch occupies residues 182–252 (AHADLTEIVE…ITDKALTMLD (71 aa)). The tract at residues 255–332 (HEGLDYVDQK…EHLGYEYNEK (78 aa)) is head domain (RuvB-H). Residues arginine 291, arginine 310, arginine 312, and arginine 315 each coordinate DNA.

The protein belongs to the RuvB family. As to quaternary structure, homohexamer. Forms an RuvA(8)-RuvB(12)-Holliday junction (HJ) complex. HJ DNA is sandwiched between 2 RuvA tetramers; dsDNA enters through RuvA and exits via RuvB. An RuvB hexamer assembles on each DNA strand where it exits the tetramer. Each RuvB hexamer is contacted by two RuvA subunits (via domain III) on 2 adjacent RuvB subunits; this complex drives branch migration. In the full resolvosome a probable DNA-RuvA(4)-RuvB(12)-RuvC(2) complex forms which resolves the HJ.

It localises to the cytoplasm. It carries out the reaction ATP + H2O = ADP + phosphate + H(+). Functionally, the RuvA-RuvB-RuvC complex processes Holliday junction (HJ) DNA during genetic recombination and DNA repair, while the RuvA-RuvB complex plays an important role in the rescue of blocked DNA replication forks via replication fork reversal (RFR). RuvA specifically binds to HJ cruciform DNA, conferring on it an open structure. The RuvB hexamer acts as an ATP-dependent pump, pulling dsDNA into and through the RuvAB complex. RuvB forms 2 homohexamers on either side of HJ DNA bound by 1 or 2 RuvA tetramers; 4 subunits per hexamer contact DNA at a time. Coordinated motions by a converter formed by DNA-disengaged RuvB subunits stimulates ATP hydrolysis and nucleotide exchange. Immobilization of the converter enables RuvB to convert the ATP-contained energy into a lever motion, pulling 2 nucleotides of DNA out of the RuvA tetramer per ATP hydrolyzed, thus driving DNA branch migration. The RuvB motors rotate together with the DNA substrate, which together with the progressing nucleotide cycle form the mechanistic basis for DNA recombination by continuous HJ branch migration. Branch migration allows RuvC to scan DNA until it finds its consensus sequence, where it cleaves and resolves cruciform DNA. This is Holliday junction branch migration complex subunit RuvB from Streptococcus pneumoniae (strain CGSP14).